We begin with the raw amino-acid sequence, 57 residues long: UPF0391 membrane protein RPC_2356 (57 aa).

The next 2 helical transmembrane spans lie at Trp6 to Ser26 and Ile35 to Phe55.

The protein belongs to the UPF0391 family.

Its subcellular location is the cell membrane. The sequence is that of UPF0391 membrane protein RPC_2356 from Rhodopseudomonas palustris (strain BisB18).